The following is a 159-amino-acid chain: 17 kDa surface antigen (159 aa).

The signal sequence occupies residues 1 to 19; it reads MKLLSKIMIIALATSMLQA. Cysteine 20 carries the N-palmitoyl cysteine lipid modification. Cysteine 20 is lipidated: S-diacylglycerol cysteine.

This sequence belongs to the rickettsiale 17 kDa surface antigen family.

It localises to the cell outer membrane. In Rickettsia japonica (strain ATCC VR-1363 / YH), this protein is 17 kDa surface antigen (omp).